A 249-amino-acid polypeptide reads, in one-letter code: Kallikrein-7 (249 aa).

An N-terminal signal peptide occupies residues 1–21 (MGVWLLSLITVLLSLALETAG). The propeptide at 22 to 25 (QGER) is activation peptide. Residues 26-246 (IIDGYKCKEG…YKRWVMETMK (221 aa)) form a serine protease region. Disulfide bonds link Cys-32/Cys-161, Cys-51/Cys-67, Cys-133/Cys-235, Cys-140/Cys-207, Cys-172/Cys-186, and Cys-197/Cys-222. Residues His-66 and Asp-108 each act as charge relay system in the active site. Ser-201 serves as the catalytic Charge relay system.

It belongs to the peptidase S1 family. Kallikrein subfamily. As to expression, expressed in skin and, at lower levels, in lung, kidney, brain, heart and spleen. In skin, expressed in high suprabasal keratinocytes and in the luminal parts of hair follicles. Not detected in liver and skeletal muscle.

It is found in the secreted. The catalysed reaction is Cleavage of proteins with aromatic side chains in the P1 position.. Its activity is regulated as follows. Inhibited by Zn2+ and Cu2+ at low micromolar concentrations. Inhibited by SERPINA12. Its function is as follows. May catalyze the degradation of intercellular cohesive structures in the cornified layer of the skin in the continuous shedding of cells from the skin surface. Specific for amino acid residues with aromatic side chains in the P1 position. Cleaves insulin A chain at '14-Tyr-|-Gln-15' and insulin B chain at '6-Leu-|-Cys-7', '16-Tyr-|-Leu-17', '25-Phe-|-Tyr-26' and '26-Tyr-|-Thr-27'. Could play a role in the activation of precursors to inflammatory cytokines. The chain is Kallikrein-7 (Klk7) from Mus musculus (Mouse).